We begin with the raw amino-acid sequence, 174 residues long: Ribosome maturation factor RimM (174 aa).

In terms of domain architecture, PRC barrel spans 98–172 (AGEYYYHQIV…VVTVELMEGL (75 aa)).

Belongs to the RimM family. In terms of assembly, binds ribosomal protein uS19.

Its subcellular location is the cytoplasm. Its function is as follows. An accessory protein needed during the final step in the assembly of 30S ribosomal subunit, possibly for assembly of the head region. Essential for efficient processing of 16S rRNA. May be needed both before and after RbfA during the maturation of 16S rRNA. It has affinity for free ribosomal 30S subunits but not for 70S ribosomes. In Lactiplantibacillus plantarum (strain ATCC BAA-793 / NCIMB 8826 / WCFS1) (Lactobacillus plantarum), this protein is Ribosome maturation factor RimM.